We begin with the raw amino-acid sequence, 412 residues long: 1-deoxy-D-xylulose 5-phosphate reductoisomerase (412 aa).

8 residues coordinate NADPH: T10, G11, S12, I13, G36, K37, N38, and N130. K131 is a 1-deoxy-D-xylulose 5-phosphate binding site. NADPH is bound at residue E132. D156 is a Mn(2+) binding site. 1-deoxy-D-xylulose 5-phosphate-binding residues include S157, E158, S194, and H217. Position 158 (E158) interacts with Mn(2+). G223 contributes to the NADPH binding site. S230, N235, K236, and E239 together coordinate 1-deoxy-D-xylulose 5-phosphate. E239 provides a ligand contact to Mn(2+).

This sequence belongs to the DXR family. Mg(2+) is required as a cofactor. It depends on Mn(2+) as a cofactor.

The catalysed reaction is 2-C-methyl-D-erythritol 4-phosphate + NADP(+) = 1-deoxy-D-xylulose 5-phosphate + NADPH + H(+). The protein operates within isoprenoid biosynthesis; isopentenyl diphosphate biosynthesis via DXP pathway; isopentenyl diphosphate from 1-deoxy-D-xylulose 5-phosphate: step 1/6. In terms of biological role, catalyzes the NADPH-dependent rearrangement and reduction of 1-deoxy-D-xylulose-5-phosphate (DXP) to 2-C-methyl-D-erythritol 4-phosphate (MEP). The sequence is that of 1-deoxy-D-xylulose 5-phosphate reductoisomerase from Prochlorococcus marinus (strain NATL1A).